The primary structure comprises 160 residues: Ribosomal RNA large subunit methyltransferase H (160 aa).

Residues L76 and G108 each coordinate S-adenosyl-L-methionine.

The protein belongs to the RNA methyltransferase RlmH family. Homodimer.

The protein localises to the cytoplasm. The enzyme catalyses pseudouridine(1915) in 23S rRNA + S-adenosyl-L-methionine = N(3)-methylpseudouridine(1915) in 23S rRNA + S-adenosyl-L-homocysteine + H(+). Its function is as follows. Specifically methylates the pseudouridine at position 1915 (m3Psi1915) in 23S rRNA. The polypeptide is Ribosomal RNA large subunit methyltransferase H (Nitrobacter hamburgensis (strain DSM 10229 / NCIMB 13809 / X14)).